Here is a 652-residue protein sequence, read N- to C-terminus: Acetyl-coenzyme A synthetase (652 aa).

CoA contacts are provided by residues 189 to 192 (RGGK) and Ser-311. ATP is bound by residues 387–389 (GEP), 411–416 (DTWWQT), Asp-500, and Arg-515. CoA is bound at residue Ser-523. ATP is bound at residue Arg-526. Positions 537, 539, and 542 each coordinate Mg(2+). CoA is bound at residue Lys-584. An N6-acetyllysine modification is found at Lys-609.

It belongs to the ATP-dependent AMP-binding enzyme family. Mg(2+) is required as a cofactor. Acetylated. Deacetylation by the SIR2-homolog deacetylase activates the enzyme.

It catalyses the reaction acetate + ATP + CoA = acetyl-CoA + AMP + diphosphate. Functionally, catalyzes the conversion of acetate into acetyl-CoA (AcCoA), an essential intermediate at the junction of anabolic and catabolic pathways. AcsA undergoes a two-step reaction. In the first half reaction, AcsA combines acetate with ATP to form acetyl-adenylate (AcAMP) intermediate. In the second half reaction, it can then transfer the acetyl group from AcAMP to the sulfhydryl group of CoA, forming the product AcCoA. This chain is Acetyl-coenzyme A synthetase, found in Bartonella quintana (strain Toulouse) (Rochalimaea quintana).